The primary structure comprises 325 residues: MDSELKEEIPVHEEFILCGGAETQVLKCGPWTDLFNDQSVKRPKLLIFIIPGNPGFSAFYVPFAKALYSLTNRCFPVWTISHAGHALAPKDKKILTTSEDSNAQEIKDIYGLNGQIEHKLAFLRTHVPKDMKLVLIGHSVGSYFTLQMLKRVPELPVIRAFLLFPTIERMSESPNGRIATPLLCWSRYVLYVTGYLLLKPCPEKIKSLLIRRGLQVMNLENEFSPLNILEPFCLANAAHLGGQEMMEVVKRDDETIREHLCKLTFYYGTIDPWCPKEYYEDIKKDFPEGDIRLCEKNIPHAFIIHFNQEMADMIADSLKDDLSKM.

The Nucleophile role is filled by serine 139. Residues aspartate 271 and histidine 300 each act as charge relay system in the active site.

It belongs to the AB hydrolase superfamily. LDAH family.

It localises to the lipid droplet. The protein localises to the endoplasmic reticulum. It carries out the reaction a cholesterol ester + H2O = cholesterol + a fatty acid + H(+). Functionally, probable serine lipid hydrolase associated with lipid droplets. Has low cholesterol esterase activity. Appears to lack triglyceride lipase activity. Involved in cholesterol and triglyceride homeostasis; stimulates cellular triglyceride accumulation and cellular cholesterol release. Acts antagonistically with PNPLA2/ATGL in regulation of cellular lipid stores. May regulate triglyceride accumulation indirectly through stimulation of PNPLA2/ATGL ubiquitination and proteasomal degradation. Promotes microtubule-dependent lipid droplet fusion. Highly expressed in macrophage-rich areas in atherosclerotic lesions, suggesting that it could promote cholesterol ester turnover in macrophages. In Pongo abelii (Sumatran orangutan), this protein is Lipid droplet-associated hydrolase.